Consider the following 228-residue polypeptide: 2-C-methyl-D-erythritol 4-phosphate cytidylyltransferase (228 aa).

It belongs to the IspD/TarI cytidylyltransferase family. IspD subfamily.

The catalysed reaction is 2-C-methyl-D-erythritol 4-phosphate + CTP + H(+) = 4-CDP-2-C-methyl-D-erythritol + diphosphate. It functions in the pathway isoprenoid biosynthesis; isopentenyl diphosphate biosynthesis via DXP pathway; isopentenyl diphosphate from 1-deoxy-D-xylulose 5-phosphate: step 2/6. Its function is as follows. Catalyzes the formation of 4-diphosphocytidyl-2-C-methyl-D-erythritol from CTP and 2-C-methyl-D-erythritol 4-phosphate (MEP). This chain is 2-C-methyl-D-erythritol 4-phosphate cytidylyltransferase, found in Nostoc sp. (strain PCC 7120 / SAG 25.82 / UTEX 2576).